Consider the following 477-residue polypeptide: Methylenetetrahydrofolate--tRNA-(uracil-5-)-methyltransferase TrmFO (477 aa).

15–20 (GAGLAG) is a binding site for FAD.

The protein belongs to the MnmG family. TrmFO subfamily. Requires FAD as cofactor.

It is found in the cytoplasm. The catalysed reaction is uridine(54) in tRNA + (6R)-5,10-methylene-5,6,7,8-tetrahydrofolate + NADH + H(+) = 5-methyluridine(54) in tRNA + (6S)-5,6,7,8-tetrahydrofolate + NAD(+). It carries out the reaction uridine(54) in tRNA + (6R)-5,10-methylene-5,6,7,8-tetrahydrofolate + NADPH + H(+) = 5-methyluridine(54) in tRNA + (6S)-5,6,7,8-tetrahydrofolate + NADP(+). In terms of biological role, catalyzes the folate-dependent formation of 5-methyl-uridine at position 54 (M-5-U54) in all tRNAs. In Nitrobacter winogradskyi (strain ATCC 25391 / DSM 10237 / CIP 104748 / NCIMB 11846 / Nb-255), this protein is Methylenetetrahydrofolate--tRNA-(uracil-5-)-methyltransferase TrmFO.